A 346-amino-acid chain; its full sequence is Protein RecA (346 aa).

67–74 (GPESSGKT) serves as a coordination point for ATP.

It belongs to the RecA family.

The protein localises to the cytoplasm. Its function is as follows. Can catalyze the hydrolysis of ATP in the presence of single-stranded DNA, the ATP-dependent uptake of single-stranded DNA by duplex DNA, and the ATP-dependent hybridization of homologous single-stranded DNAs. It interacts with LexA causing its activation and leading to its autocatalytic cleavage. This is Protein RecA from Mycobacteroides abscessus (strain ATCC 19977 / DSM 44196 / CCUG 20993 / CIP 104536 / JCM 13569 / NCTC 13031 / TMC 1543 / L948) (Mycobacterium abscessus).